Consider the following 150-residue polypeptide: Infection structure-specific protein 24 (150 aa).

Functionally, involved in the development of infection structures. The germ tube elongates across the leaf surface of the infected plant until it recognizes a stomate. Physical stimuli provided by the stomate induce differentiation of the germ tube to form a series of infection structures involved in host colonization. This chain is Infection structure-specific protein 24 (INF24), found in Uromyces appendiculatus (Rust fungus).